We begin with the raw amino-acid sequence, 165 residues long: uncharacterized protein (165 aa).

The helical transmembrane segment at 4 to 26 (FVIGTMIALAGLLVGGGVGSYFT) threads the bilayer.

The protein localises to the membrane. This is an uncharacterized protein from Aquifex aeolicus (strain VF5).